The primary structure comprises 267 residues: Phosphate import ATP-binding protein PstB 2 (267 aa).

The 242-residue stretch at 21–262 (LSTKDLHVYY…AKLQSTSDYV (242 aa)) folds into the ABC transporter domain. 53-60 (GPSGCGKS) contacts ATP.

The protein belongs to the ABC transporter superfamily. Phosphate importer (TC 3.A.1.7) family. The complex is composed of two ATP-binding proteins (PstB), two transmembrane proteins (PstC and PstA) and a solute-binding protein (PstS).

The protein localises to the cell membrane. The catalysed reaction is phosphate(out) + ATP + H2O = ADP + 2 phosphate(in) + H(+). Part of the ABC transporter complex PstSACB involved in phosphate import. Responsible for energy coupling to the transport system. This is Phosphate import ATP-binding protein PstB 2 from Streptococcus mutans serotype c (strain ATCC 700610 / UA159).